The sequence spans 574 residues: WAP, Kazal, immunoglobulin, Kunitz and NTR domain-containing protein 2 (574 aa).

A signal peptide spans 1 to 32 (MWALRGCRSGSRWGQGAALLLLLLGVPPRGLA). The 54-residue stretch at 37–90 (RYSHAGICPNDMNPNLWVDAQSTCKRECETDQECETYEKCCPNVCGTKSCVAAR) folds into the WAP domain. 17 cysteine pairs are disulfide-bonded: C44-C77, C60-C81, C64-C76, C70-C86, C132-C162, C136-C155, C144-C173, C229-C285, C326-C376, C335-C359, C351-C372, C384-C434, C393-C417, C409-C430, C443-C513, C446-C515, and C457-C564. One can recognise a Kazal-like domain in the interval 124–175 (WDGQPVCKCRDRCEKEPSFTCASDGLTYYNRCYMDAEACSKGITLAVVTCRY). In terms of domain architecture, Ig-like C2-type spans 208–301 (PALLNHPAHQ…GVLRADFPLS (94 aa)). 2 consecutive BPTI/Kunitz inhibitor domains span residues 326-376 (CLKP…MLAC) and 384-434 (CSLP…EESC). Residues 443 to 564 (CRACKPRQKL…LREVMHKKTC (122 aa)) form the NTR domain. N517 is a glycosylation site (N-linked (GlcNAc...) asparagine).

This sequence belongs to the WFIKKN family. In terms of assembly, interacts with both mature and propeptide myostatin/MSTN.

Its subcellular location is the secreted. Its function is as follows. Protease-inhibitor that contains multiple distinct protease inhibitor domains. Probably has serine protease- and metalloprotease-inhibitor activity. Inhibits the biological activity of mature myostatin, but not activin. This is WAP, Kazal, immunoglobulin, Kunitz and NTR domain-containing protein 2 (WFIKKN2) from Bos taurus (Bovine).